Consider the following 187-residue polypeptide: Avirulence protein ATR39-2 (187 aa).

The N-terminal stretch at 1 to 20 (MVKCTPLLALTVIVSAGSDA) is a signal peptide. The RxLR-dEER signature appears at 49–66 (RVLRASDVPNEVAAGESR).

Belongs to the RxLR effector family.

It localises to the secreted. The protein localises to the host cell. Secreted effector that acts as an elicitor of hypersensitive response (HR) specifically on plants carrying defense protein RPP39. The allele ATR39-1 is recognized by RPP39, whereas the ATR39-2 allele is nor recognized. This chain is Avirulence protein ATR39-2, found in Hyaloperonospora arabidopsidis (strain Emoy2) (Downy mildew agent).